We begin with the raw amino-acid sequence, 239 residues long: tRNA (guanine-N(7)-)-methyltransferase (239 aa).

The S-adenosyl-L-methionine site is built by E69, E94, D121, and D144. D144 is an active-site residue. K148 lines the substrate pocket. Residues 150–155 are interaction with RNA; that stretch reads RHNKRR. Residues D180 and 217–220 contribute to the substrate site; that span reads TKFE.

The protein belongs to the class I-like SAM-binding methyltransferase superfamily. TrmB family. In terms of assembly, monomer.

The enzyme catalyses guanosine(46) in tRNA + S-adenosyl-L-methionine = N(7)-methylguanosine(46) in tRNA + S-adenosyl-L-homocysteine. The protein operates within tRNA modification; N(7)-methylguanine-tRNA biosynthesis. Catalyzes the formation of N(7)-methylguanine at position 46 (m7G46) in tRNA. The sequence is that of tRNA (guanine-N(7)-)-methyltransferase from Salmonella paratyphi A (strain ATCC 9150 / SARB42).